We begin with the raw amino-acid sequence, 414 residues long: Hydroxysqualene dehydroxylase (414 aa).

This sequence belongs to the HpnE family.

It catalyses the reaction squalene + FAD + H2O + H(+) = hydroxysqualene + FADH2. The protein operates within secondary metabolite biosynthesis; hopanoid biosynthesis. In terms of biological role, involved in the biosynthesis of the hopanoid precursor squalene (SQ) from farnesyl diphosphate (FPP). Catalyzes the third (last) step, the reduction of hydroxysqualene (HSQ) to SQ. The sequence is that of Hydroxysqualene dehydroxylase from Zymomonas mobilis subsp. mobilis (strain ATCC 31821 / ZM4 / CP4).